Consider the following 385-residue polypeptide: MTKIFRKSNPLNKMINSSLIDLPSPSNISYLWNFGSLTGLCLALQIISGLLLTMHFSPSINLAFDSTVHIVRDVYGGWFIRNVHISGASLFFTCMFIHIGRGIYYGSFKNLKTWYSGVILFILSMLTAFLGYVLPWGQMSFWAATVITNLLSAVPMMGGTLVETVWGGYSVGDPTLKRFLVLHFLMPFSMIAVSLIHLVFLHETGSNNPMGINPNMDKIPFHPYLSFKDILGFSFLLTFLITFSLLLPYLTTDPDNFSPANSMVTPPHIKPEWYFLFAYSILRAIPNKLAGIIALVMSLSVLLLMPILIRSNKRSMTFMPLMQVTFWLMVCNFIFLSWLGAMPLEPPFILMSQISSFIYFFIFFVMFPLISRNEDKILEFHAMYS.

The next 4 membrane-spanning stretches (helical) occupy residues 34–54 (FGSL…LLTM), 78–99 (WFIR…FIHI), 114–134 (WYSG…GYVL), and 179–199 (FLVL…IHLV). 2 residues coordinate heme b: His-84 and His-98. Heme b contacts are provided by His-183 and His-197. His-202 is an a ubiquinone binding site. The next 4 helical transmembrane spans lie at 227–247 (FKDI…SLLL), 289–309 (LAGI…PILI), 321–341 (LMQV…WLGA), and 348–368 (FILM…VMFP).

It belongs to the cytochrome b family. In terms of assembly, the cytochrome bc1 complex contains 3 respiratory subunits (MT-CYB, CYC1 and UQCRFS1), 2 core proteins (UQCRC1 and UQCRC2) and probably 6 low-molecular weight proteins. It depends on heme b as a cofactor.

Its subcellular location is the mitochondrion inner membrane. Functionally, component of the ubiquinol-cytochrome c reductase complex (complex III or cytochrome b-c1 complex) that is part of the mitochondrial respiratory chain. The b-c1 complex mediates electron transfer from ubiquinol to cytochrome c. Contributes to the generation of a proton gradient across the mitochondrial membrane that is then used for ATP synthesis. This chain is Cytochrome b (MT-CYB), found in Eptatretus burgeri (Inshore hagfish).